The primary structure comprises 119 residues: Holo-[acyl-carrier-protein] synthase (119 aa).

Residues D5 and E51 each contribute to the Mg(2+) site.

This sequence belongs to the P-Pant transferase superfamily. AcpS family. Requires Mg(2+) as cofactor.

The protein resides in the cytoplasm. The enzyme catalyses apo-[ACP] + CoA = holo-[ACP] + adenosine 3',5'-bisphosphate + H(+). In terms of biological role, transfers the 4'-phosphopantetheine moiety from coenzyme A to a Ser of acyl-carrier-protein. This is Holo-[acyl-carrier-protein] synthase from Helicobacter pylori (strain G27).